Reading from the N-terminus, the 339-residue chain is Biotin synthase (339 aa).

The Radical SAM core domain maps to 55 to 282 (NAVQLSTLLS…KAVVRLSAGR (228 aa)). 3 residues coordinate [4Fe-4S] cluster: cysteine 70, cysteine 74, and cysteine 77. The [2Fe-2S] cluster site is built by cysteine 114, cysteine 145, cysteine 205, and arginine 277.

The protein belongs to the radical SAM superfamily. Biotin synthase family. As to quaternary structure, homodimer. [4Fe-4S] cluster is required as a cofactor. Requires [2Fe-2S] cluster as cofactor.

The catalysed reaction is (4R,5S)-dethiobiotin + (sulfur carrier)-SH + 2 reduced [2Fe-2S]-[ferredoxin] + 2 S-adenosyl-L-methionine = (sulfur carrier)-H + biotin + 2 5'-deoxyadenosine + 2 L-methionine + 2 oxidized [2Fe-2S]-[ferredoxin]. It participates in cofactor biosynthesis; biotin biosynthesis; biotin from 7,8-diaminononanoate: step 2/2. In terms of biological role, catalyzes the conversion of dethiobiotin (DTB) to biotin by the insertion of a sulfur atom into dethiobiotin via a radical-based mechanism. The protein is Biotin synthase of Burkholderia orbicola (strain MC0-3).